The following is an 884-amino-acid chain: Microsomal triglyceride transfer protein large subunit (884 aa).

Positions 1–21 (MMPVAGLLLCVTAVLCTSALG) are cleaved as a signal peptide. The Vitellogenin domain maps to 26–660 (LDNGKLYRYS…QSNNALLHGL (635 aa)). A disulfide bridge connects residues Cys-172 and Cys-192. N-linked (GlcNAc...) asparagine glycosylation occurs at Asn-348. The cysteines at positions 438 and 443 are disulfide-linked. N-linked (GlcNAc...) asparagine glycosylation is present at Asn-787.

Heterodimer; heterodimerizes with the protein disulfide isomerase. As to expression, highest expression in the proximal part of the anterior intestine. Lower expression in the distal part of the anterior intestine, in the posterior portion of the intestinal tube and liver. Very low expression levels in heart, brain, ovary, testis and kidney.

It localises to the endoplasmic reticulum. Its subcellular location is the golgi apparatus. It catalyses the reaction a 1,2-diacyl-sn-glycero-3-phosphocholine(in) = a 1,2-diacyl-sn-glycero-3-phosphocholine(out). It carries out the reaction a 1,2-diacyl-sn-glycero-3-phosphoethanolamine(in) = a 1,2-diacyl-sn-glycero-3-phosphoethanolamine(out). The catalysed reaction is a cholesterol ester(in) = a cholesterol ester(out). The enzyme catalyses a triacyl-sn-glycerol(in) = a triacyl-sn-glycerol(out). Inhibited by naringenin. Functionally, catalyzes the transport of triglyceride between phospholipid surfaces. Catalyzes the transport of cholesteryl ester, and phospholipid between phospholipid surfaces. Required for the assembly and secretion of plasma lipoproteins that contain apolipoprotein B. Required for yolk lipid utilization and absorption of dietary lipids in larvae. The polypeptide is Microsomal triglyceride transfer protein large subunit (Danio rerio (Zebrafish)).